Reading from the N-terminus, the 440-residue chain is Phosphatidylcholine-sterol acyltransferase (440 aa).

The first 24 residues, 1-24 (MGPPGSPWQWVLLLLGLLLPPAAP), serve as a signal peptide directing secretion. Asparagine 44 is a glycosylation site (N-linked (GlcNAc...) asparagine). Residues cysteine 74 and cysteine 98 are joined by a disulfide bond. N-linked (GlcNAc...) asparagine glycosylation occurs at asparagine 108. The active-site Nucleophile is the serine 205. The N-linked (GlcNAc...) asparagine glycan is linked to asparagine 296. A disulfide bridge links cysteine 337 with cysteine 380. Catalysis depends on charge relay system residues aspartate 369 and histidine 401. A glycan (N-linked (GlcNAc...) asparagine) is linked at asparagine 408.

The protein belongs to the AB hydrolase superfamily. Lipase family. In terms of tissue distribution, detected in blood plasma (at protein level). Highly expressed in liver.

It localises to the secreted. The enzyme catalyses a sterol + a 1,2-diacyl-sn-glycero-3-phosphocholine = a sterol ester + a 1-acyl-sn-glycero-3-phosphocholine. It catalyses the reaction a 1-O-alkyl-2-acetyl-sn-glycero-3-phosphocholine + H2O = a 1-O-alkyl-sn-glycero-3-phosphocholine + acetate + H(+). The catalysed reaction is a 1-hexadecanoyl-2-acyl-sn-glycero-3-phosphocholine + (24S)-hydroxycholesterol = (24S)-24-hydroxycholesterol ester + 1-hexadecanoyl-sn-glycero-3-phosphocholine. It carries out the reaction (24S)-hydroxycholesterol + 1-hexadecanoyl-2-(9Z,12Z-octadecadienoyl)-sn-glycero-3-phosphocholine = (24S)-hydroxycholesterol 3-linoleoate + 1-hexadecanoyl-sn-glycero-3-phosphocholine. The enzyme catalyses 1-hexadecanoyl-2-(5Z,8Z,11Z,14Z-eicosatetraenoyl)-sn-glycero-3-phosphocholine + cholesterol = cholesteryl (5Z,8Z,11Z,14Z)-eicosatetraenoate + 1-hexadecanoyl-sn-glycero-3-phosphocholine. It catalyses the reaction 1-hexadecanoyl-2-(9Z-octadecenoyl)-sn-glycero-3-phosphocholine + cholesterol = cholesteryl (9Z-octadecenoate) + 1-hexadecanoyl-sn-glycero-3-phosphocholine. The catalysed reaction is 1-hexadecanoyl-2-(8Z,11Z,14Z-eicosatrienoyl)-sn-glycero-3-phosphocholine + cholesterol = cholesteryl (8Z,11Z,14Z)-eicosatrienoate + 1-hexadecanoyl-sn-glycero-3-phosphocholine. It carries out the reaction 1-hexadecanoyl-2-(5Z,8Z,11Z-eicosatrienoyl)-sn-glycero-3-phosphocholine + cholesterol = cholesteryl (5Z,8Z,11Z)-eicosatrienoate + 1-hexadecanoyl-sn-glycero-3-phosphocholine. The enzyme catalyses 1-hexadecanoyl-2-(5Z,8Z,11Z,14Z,17Z-eicosapentaenoyl)-sn-glycero-3-phosphocholine + cholesterol = (5Z,8Z,11Z,14Z,17Z-eicosapentaenoyl)-cholesterol + 1-hexadecanoyl-sn-glycero-3-phosphocholine. It catalyses the reaction 1-hexadecanoyl-2-(9Z,12Z-octadecadienoyl)-sn-glycero-3-phosphocholine + cholesterol = cholesteryl (9Z,12Z)-octadecadienoate + 1-hexadecanoyl-sn-glycero-3-phosphocholine. The catalysed reaction is 1-hexadecanoyl-2-(6Z,9Z,12Z-octadecatrienoyl)-sn-glycero-3-phosphocholine + cholesterol = (6Z,9Z,12Z-octadecatrienoyl)-cholesterol + 1-hexadecanoyl-sn-glycero-3-phosphocholine. It carries out the reaction 1-hexadecanoyl-2-(11Z,14Z,17Z-eicosatrienoyl)-sn-glycero-3-phosphocholine + cholesterol = (11Z,14Z,17Z-eicosatrienoyl)-cholesterol + 1-hexadecanoyl-sn-glycero-3-phosphocholine. The enzyme catalyses 1-hexadecanoyl-2-(9Z,12Z,15Z-octadecatrienoyl)-sn-glycero-3-phosphocholine + cholesterol = (9Z,12Z,15Z-octadecatrienoyl)-cholesterol + 1-hexadecanoyl-sn-glycero-3-phosphocholine. It catalyses the reaction 1-hexadecanoyl-2-(9Z,12Z-octadecadienoyl)-sn-glycero-3-phosphocholine + H2O = (9Z,12Z)-octadecadienoate + 1-hexadecanoyl-sn-glycero-3-phosphocholine + H(+). The catalysed reaction is 1-hexadecanoyl-2-(5Z,8Z,11Z,14Z-eicosatetraenoyl)-sn-glycero-3-phosphocholine + H2O = 1-hexadecanoyl-sn-glycero-3-phosphocholine + (5Z,8Z,11Z,14Z)-eicosatetraenoate + H(+). It carries out the reaction a 1-O-alkyl-2-acetyl-sn-glycero-3-phosphocholine + 1-hexadecanoyl-sn-glycero-3-phosphocholine = 1-hexadecanoyl-2-acetyl-sn-glycero-3-phosphocholine + a 1-O-alkyl-sn-glycero-3-phosphocholine. Its function is as follows. Central enzyme in the extracellular metabolism of plasma lipoproteins. Synthesized mainly in the liver and secreted into plasma where it converts cholesterol and phosphatidylcholines (lecithins) to cholesteryl esters and lysophosphatidylcholines on the surface of high and low density lipoproteins (HDLs and LDLs). The cholesterol ester is then transported back to the liver. Also produced in the brain by primary astrocytes, and esterifies free cholesterol on nascent APOE-containing lipoproteins secreted from glia and influences cerebral spinal fluid (CSF) APOE- and APOA1 levels. Together with APOE and the cholesterol transporter ABCA1, plays a key role in the maturation of glial-derived, nascent lipoproteins. Required for remodeling high-density lipoprotein particles into their spherical forms. Has a preference for plasma 16:0-18:2 or 18:O-18:2 phosphatidylcholines. Catalyzes the hydrolysis of 1-O-alkyl-2-acetyl-sn-glycero-3-phosphocholine (platelet-activating factor or PAF) to 1-O-alkyl-sn-glycero-3-phosphocholine (lyso-PAF). Also catalyzes the transfer of the acetate group from PAF to 1-hexadecanoyl-sn-glycero-3-phosphocholine forming lyso-PAF. Catalyzes the esterification of (24S)-hydroxycholesterol (24(S)OH-C), also known as cerebrosterol to produce 24(S)OH-C monoesters. The polypeptide is Phosphatidylcholine-sterol acyltransferase (LCAT) (Oryctolagus cuniculus (Rabbit)).